The primary structure comprises 102 residues: Thioredoxin (102 aa).

A Thioredoxin domain is found at 2-102; it reads LHIDELTFEN…ILIHTINKYL (101 aa). Catalysis depends on nucleophile residues Cys-29 and Cys-32. Cys-29 and Cys-32 form a disulfide bridge.

The protein belongs to the thioredoxin family.

It is found in the plastid. The protein resides in the chloroplast. Functionally, participates in various redox reactions through the reversible oxidation of its active center dithiol to a disulfide and catalyzes dithiol-disulfide exchange reactions. The polypeptide is Thioredoxin (trxA) (Cyanidioschyzon merolae (strain NIES-3377 / 10D) (Unicellular red alga)).